Reading from the N-terminus, the 423-residue chain is Polyglutamylase complex subunit TTLL1 (423 aa).

One can recognise a TTL domain in the interval 1 to 367 (MAGRVKWVTD…NGEIPDCKWN (367 aa)). Residues K138, 144-145 (QG), 181-184 (SLYI), and 194-196 (KFD) each bind ATP. Q144 is a binding site for a protein. R220 lines the L-glutamate pocket. 241–242 (TN) serves as a coordination point for ATP. K259 contributes to the L-glutamate binding site. Mg(2+)-binding residues include D313, E326, and N328. K344 serves as a coordination point for L-glutamate. A disordered region spans residues 390–423 (DGAERELRSRPGQPVGPRTGRSRDSGRNVLTTWK).

This sequence belongs to the tubulin polyglutamylase family. In terms of assembly, part of the neuronal tubulin polyglutamylase complex which contains TPGS1, TPGS2, TTLL1, LRRC49 and NICN1. Interacts with PCM1, CSTPP1 and LRRC49. Requires Mg(2+) as cofactor.

Its subcellular location is the cytoplasm. It is found in the cytoskeleton. It localises to the cilium basal body. The protein localises to the cilium axoneme. The protein resides in the cell projection. Its subcellular location is the cilium. It is found in the flagellum. It carries out the reaction (L-glutamyl)(n)-gamma-L-glutamyl-L-glutamyl-[protein] + L-glutamate + ATP = (L-glutamyl)(n+1)-gamma-L-glutamyl-L-glutamyl-[protein] + ADP + phosphate + H(+). Its function is as follows. Catalytic subunit of a polyglutamylase complex which modifies tubulin, generating side chains of glutamate on the gamma-carboxyl group of specific glutamate residues within the C-terminal tail of tubulin. Probably involved in the side-chain elongation step of the polyglutamylation reaction rather than the initiation step. Modifies both alpha- and beta-tubulins with a preference for the alpha-tail. Unlike most polyglutamylases of the tubulin--tyrosine ligase family, only displays a catalytic activity when in complex with other proteins as it is most likely lacking domains important for autonomous activity. Part of the neuronal tubulin polyglutamylase complex. Mediates cilia and flagella polyglutamylation which is essential for their biogenesis and motility. Involved in respiratory motile cilia function through the regulation of beating asymmetry. Essential for sperm flagella biogenesis, motility and male fertility. Involved in KLF4 glutamylation which impedes its ubiquitination, thereby leading to somatic cell reprogramming, pluripotency maintenance and embryogenesis. In Rattus norvegicus (Rat), this protein is Polyglutamylase complex subunit TTLL1 (Ttll1).